We begin with the raw amino-acid sequence, 436 residues long: Trigger factor (436 aa).

In terms of domain architecture, PPIase FKBP-type spans 163–248 (TDRVIIDFAG…VKNVAEAILP (86 aa)).

Belongs to the FKBP-type PPIase family. Tig subfamily.

The protein resides in the cytoplasm. The enzyme catalyses [protein]-peptidylproline (omega=180) = [protein]-peptidylproline (omega=0). Involved in protein export. Acts as a chaperone by maintaining the newly synthesized protein in an open conformation. Functions as a peptidyl-prolyl cis-trans isomerase. This is Trigger factor from Laribacter hongkongensis (strain HLHK9).